The primary structure comprises 321 residues: Glucokinase (321 aa).

Residue 8 to 13 coordinates ATP; it reads GDVGGT.

It belongs to the bacterial glucokinase family.

The protein localises to the cytoplasm. The enzyme catalyses D-glucose + ATP = D-glucose 6-phosphate + ADP + H(+). The sequence is that of Glucokinase from Erwinia tasmaniensis (strain DSM 17950 / CFBP 7177 / CIP 109463 / NCPPB 4357 / Et1/99).